The primary structure comprises 63 residues: Race-specific elicitor A9 (63 aa).

Residues 1-23 (MKLSLLSVELALLIATTLPLCWA) form the signal peptide. Residues 24-35 (AALPVGLGVGLD) constitute a propeptide that is removed on maturation. 3 disulfides stabilise this stretch: Cys-37–Cys-51, Cys-41–Cys-54, and Cys-47–Cys-61.

This necrosis-inducing peptide induces a hypersensitive response on Cf-9 tomato genotypes. Race-specific elicitors are compounds which only induce defense responses in genotypes of host plants which are resistant to the pathogenic race that produces the elicitor, but not in susceptible genotypes. This Passalora fulva (Tomato leaf mold) protein is Race-specific elicitor A9 (AVR9).